Reading from the N-terminus, the 84-residue chain is Kunitz-type serine protease inhibitor B4 (84 aa).

The N-terminal stretch at 1–24 (MSSGGLLLLLGLLTLWAELTPISG) is a signal peptide. In terms of domain architecture, BPTI/Kunitz inhibitor spans 31 to 81 (CNLAPESGRCRGHLRRIYYNLESNKCEVFFYGGCGGNDNNFSTWDECRHTC). Cystine bridges form between cysteine 31/cysteine 81, cysteine 40/cysteine 64, and cysteine 56/cysteine 77. Asparagine 70 is a glycosylation site (N-linked (GlcNAc...) asparagine).

Belongs to the venom Kunitz-type family. As to expression, expressed by the venom gland.

The protein localises to the secreted. In terms of biological role, serine protease inhibitor that inhibits plasmin and trypsin. The protein is Kunitz-type serine protease inhibitor B4 of Daboia siamensis (Eastern Russel's viper).